The primary structure comprises 142 residues: U1 small nuclear ribonucleoprotein C (142 aa).

A Matrin-type zinc finger spans residues 4–36; sequence YYCDYCDTFLTHDSPSVRKTHNGGRKHKDNVRM.

The protein belongs to the U1 small nuclear ribonucleoprotein C family. As to quaternary structure, U1 snRNP is composed of the 7 core Sm proteins B/B', D1, D2, D3, E, F and G that assemble in a heptameric protein ring on the Sm site of the small nuclear RNA to form the core snRNP, and at least 3 U1 snRNP-specific proteins U1-70K, U1-A and U1-C. U1-C interacts with U1 snRNA and the 5' splice-site region of the pre-mRNA.

It is found in the nucleus. Functionally, component of the spliceosomal U1 snRNP, which is essential for recognition of the pre-mRNA 5' splice-site and the subsequent assembly of the spliceosome. U1-C is directly involved in initial 5' splice-site recognition for both constitutive and regulated alternative splicing. The interaction with the 5' splice-site seems to precede base-pairing between the pre-mRNA and the U1 snRNA. Stimulates commitment or early (E) complex formation by stabilizing the base pairing of the 5' end of the U1 snRNA and the 5' splice-site region. The polypeptide is U1 small nuclear ribonucleoprotein C (Caenorhabditis briggsae).